The primary structure comprises 531 residues: Outer dynein arm-docking complex subunit 4 (531 aa).

TPR repeat units follow at residues 15 to 48 (FSTY…QPEE), 50 to 82 (NCLV…ENDF), and 83 to 116 (FKGL…RPEF). A disordered region spans residues 161–185 (KQKAQVKVQKKDSKQQKKVDPERSQ). Positions 169–185 (QKKDSKQQKKVDPERSQ) are enriched in basic and acidic residues. 5 TPR repeats span residues 275-307 (VKSL…VERW), 320-353 (GSLH…AEKY), 360-393 (SRAL…ANSS), 397-430 (TWLY…ADAA), and 437-470 (LNAC…ARLL). The tract at residues 487–531 (KQGMEEQQESEQNNDENDNLRADGNTARDEEEEDVHVQRTEEDEG) is disordered. The span at 492–503 (EQQESEQNNDEN) shows a compositional bias: acidic residues. The span at 521-531 (VHVQRTEEDEG) shows a compositional bias: basic and acidic residues.

In terms of assembly, component of the outer dynein arm-docking complex. In terms of tissue distribution, in the mucociliary epithelium, specifically expressed in ciliated cells.

The protein localises to the cytoplasm. It is found in the cytoskeleton. The protein resides in the cilium axoneme. Its function is as follows. Component of the outer dynein arm-docking complex (ODA-DC) that mediates outer dynein arms (ODA) binding onto the doublet microtubule. Plays an essential role for the assembly of ODA-DC and in the docking of ODA in ciliary axoneme. Functionally, required for the docking of the outer dynein arm to cilia, hence plays an essential role in cilia motility. This chain is Outer dynein arm-docking complex subunit 4 (odad4), found in Xenopus laevis (African clawed frog).